The following is a 435-amino-acid chain: Putrescine transporter PotE (435 aa).

The next 12 helical transmembrane spans lie at 8 to 28, 39 to 59, 95 to 115, 117 to 137, 148 to 168, 185 to 205, 224 to 244, 275 to 295, 320 to 340, 354 to 374, 386 to 406, and 409 to 429; these read IGVV…GIIM, ISIV…YAFA, LVIA…ELFG, ILSP…ATVL, ISSF…IIGW, VPTF…FLGL, IAVL…TNVI, VIMG…QFTI, APVV…LMTI, LAVV…AVLL, TTVF…YAAG, and AMLY…FVSY.

Belongs to the amino acid-polyamine-organocation (APC) superfamily. Basic amino acid/polyamine antiporter (APA) (TC 2.A.3.2) family.

It is found in the cell inner membrane. The catalysed reaction is putrescine(in) + H(+)(in) = putrescine(out) + H(+)(out). It catalyses the reaction putrescine(in) + L-ornithine(out) = putrescine(out) + L-ornithine(in). Its function is as follows. Catalyzes both the uptake and excretion of putrescine. The uptake of putrescine is dependent on the membrane potential and the excretion involves putrescine-ornithine antiporter activity. This chain is Putrescine transporter PotE, found in Haemophilus influenzae (strain ATCC 51907 / DSM 11121 / KW20 / Rd).